Here is a 231-residue protein sequence, read N- to C-terminus: ATP phosphoribosyltransferase (231 aa).

This sequence belongs to the ATP phosphoribosyltransferase family. Short subfamily. As to quaternary structure, heteromultimer composed of HisG and HisZ subunits.

The protein localises to the cytoplasm. It catalyses the reaction 1-(5-phospho-beta-D-ribosyl)-ATP + diphosphate = 5-phospho-alpha-D-ribose 1-diphosphate + ATP. It functions in the pathway amino-acid biosynthesis; L-histidine biosynthesis; L-histidine from 5-phospho-alpha-D-ribose 1-diphosphate: step 1/9. Functionally, catalyzes the condensation of ATP and 5-phosphoribose 1-diphosphate to form N'-(5'-phosphoribosyl)-ATP (PR-ATP). Has a crucial role in the pathway because the rate of histidine biosynthesis seems to be controlled primarily by regulation of HisG enzymatic activity. This Brucella anthropi (strain ATCC 49188 / DSM 6882 / CCUG 24695 / JCM 21032 / LMG 3331 / NBRC 15819 / NCTC 12168 / Alc 37) (Ochrobactrum anthropi) protein is ATP phosphoribosyltransferase.